A 555-amino-acid polypeptide reads, in one-letter code: Potassium-transporting ATPase potassium-binding subunit (555 aa).

The next 10 membrane-spanning stretches (helical) occupy residues isoleucine 2–isoleucine 22, glutamine 60–phenylalanine 80, isoleucine 130–phenylalanine 150, valine 173–threonine 193, methionine 246–tyrosine 266, isoleucine 278–glutamate 298, alanine 374–valine 394, leucine 412–leucine 432, leucine 483–leucine 503, and glycine 525–leucine 545.

This sequence belongs to the KdpA family. The system is composed of three essential subunits: KdpA, KdpB and KdpC.

The protein resides in the cell membrane. Functionally, part of the high-affinity ATP-driven potassium transport (or Kdp) system, which catalyzes the hydrolysis of ATP coupled with the electrogenic transport of potassium into the cytoplasm. This subunit binds the extracellular potassium ions and delivers the ions to the membrane domain of KdpB through an intramembrane tunnel. The polypeptide is Potassium-transporting ATPase potassium-binding subunit (Bacillus cereus (strain Q1)).